A 466-amino-acid polypeptide reads, in one-letter code: Glutamate decarboxylase alpha (466 aa).

Substrate is bound by residues threonine 62 and asparagine 83. Pyridoxal 5'-phosphate contacts are provided by residues 126 to 127, threonine 212, and histidine 275; that span reads SS. At lysine 276 the chain carries N6-(pyridoxal phosphate)lysine.

The protein belongs to the group II decarboxylase family. Homohexamer. The cofactor is pyridoxal 5'-phosphate.

It catalyses the reaction L-glutamate + H(+) = 4-aminobutanoate + CO2. Functionally, converts glutamate to gamma-aminobutyrate (GABA), consuming one intracellular proton in the reaction. The gad system helps to maintain a near-neutral intracellular pH when cells are exposed to extremely acidic conditions. The ability to survive transit through the acidic conditions of the stomach is essential for successful colonization of the mammalian host by commensal and pathogenic bacteria. The chain is Glutamate decarboxylase alpha (gadA) from Shigella flexneri.